Reading from the N-terminus, the 367-residue chain is ELAV-like protein 3 (367 aa).

RRM domains follow at residues 39-117 (TNLI…YARP), 125-205 (ANLY…FANN), and 284-362 (WCIF…FKTS).

It belongs to the RRM elav family. As to quaternary structure, interacts with MAP1B light chain LC1. In terms of tissue distribution, brain specific.

In terms of biological role, RNA-binding protein that binds to AU-rich element (ARE) sequences of target mRNAs, including VEGF mRNA. May also bind poly-A tracts via RRM 3. May be involved in neuronal differentiation and maintenance. Plays a role in the stabilization of GAP43 mRNA and in spatial learning. In Homo sapiens (Human), this protein is ELAV-like protein 3 (ELAVL3).